Reading from the N-terminus, the 306-residue chain is Protein STPG3 (306 aa).

Residues 210–230 are disordered; that stretch reads CSYTPLLPTSKPSGEKRPSPN.

This Mus musculus (Mouse) protein is Protein STPG3.